The primary structure comprises 380 residues: Phosphate acyltransferase (380 aa).

The disordered stretch occupies residues 1-23 (MPSPPPTPETATASDRTATPAPG).

This sequence belongs to the PlsX family. As to quaternary structure, homodimer. Probably interacts with PlsY.

Its subcellular location is the cytoplasm. It catalyses the reaction a fatty acyl-[ACP] + phosphate = an acyl phosphate + holo-[ACP]. Its pathway is lipid metabolism; phospholipid metabolism. Its function is as follows. Catalyzes the reversible formation of acyl-phosphate (acyl-PO(4)) from acyl-[acyl-carrier-protein] (acyl-ACP). This enzyme utilizes acyl-ACP as fatty acyl donor, but not acyl-CoA. The polypeptide is Phosphate acyltransferase (Acidiphilium cryptum (strain JF-5)).